The chain runs to 255 residues: Tryptophan synthase alpha chain (255 aa).

Catalysis depends on proton acceptor residues E49 and D60.

The protein belongs to the TrpA family. In terms of assembly, tetramer of two alpha and two beta chains.

The enzyme catalyses (1S,2R)-1-C-(indol-3-yl)glycerol 3-phosphate + L-serine = D-glyceraldehyde 3-phosphate + L-tryptophan + H2O. The protein operates within amino-acid biosynthesis; L-tryptophan biosynthesis; L-tryptophan from chorismate: step 5/5. The alpha subunit is responsible for the aldol cleavage of indoleglycerol phosphate to indole and glyceraldehyde 3-phosphate. The polypeptide is Tryptophan synthase alpha chain (Desulfovibrio desulfuricans (strain ATCC 27774 / DSM 6949 / MB)).